We begin with the raw amino-acid sequence, 216 residues long: Nucleoside triphosphate pyrophosphatase (216 aa).

Aspartate 82 serves as the catalytic Proton acceptor.

This sequence belongs to the Maf family. Requires a divalent metal cation as cofactor.

Its subcellular location is the cytoplasm. It carries out the reaction a ribonucleoside 5'-triphosphate + H2O = a ribonucleoside 5'-phosphate + diphosphate + H(+). It catalyses the reaction a 2'-deoxyribonucleoside 5'-triphosphate + H2O = a 2'-deoxyribonucleoside 5'-phosphate + diphosphate + H(+). Nucleoside triphosphate pyrophosphatase. May have a dual role in cell division arrest and in preventing the incorporation of modified nucleotides into cellular nucleic acids. In Mycobacterium marinum (strain ATCC BAA-535 / M), this protein is Nucleoside triphosphate pyrophosphatase.